A 528-amino-acid polypeptide reads, in one-letter code: RNA polymerase sigma factor SigA (528 aa).

Residues 1 to 10 (MAATKASTAT) are compositionally biased toward polar residues. A disordered region spans residues 1-211 (MAATKASTAT…FVWDEDESEA (211 aa)). Low complexity-rich tracts occupy residues 19 to 31 (TKSP…GAKT), 38 to 56 (AKSA…PAAR), and 80 to 92 (AAKS…PSAR). Residues 100 to 109 (APKDAQHEAA) show a composition bias toward basic and acidic residues. Residues 110 to 173 (TDPEDALDSV…DDEDHEDLEA (64 aa)) show a composition bias toward acidic residues. A sigma-70 factor domain-2 region spans residues 295-365 (LLEANLRLVV…TRAMADQART (71 aa)). Positions 319–322 (DLIQ) match the Interaction with polymerase core subunit RpoC motif. The interval 374 to 450 (EVINKLGRIQ…DSEAVVAVDA (77 aa)) is sigma-70 factor domain-3. A sigma-70 factor domain-4 region spans residues 463–516 (VLDTLSEREAGVVRLRFGLTDGQPRTLDEIGQVYGVTRERIRQIESKTMSKLRH). The H-T-H motif DNA-binding region spans 489–508 (LDEIGQVYGVTRERIRQIES).

It belongs to the sigma-70 factor family. RpoD/SigA subfamily. As to quaternary structure, interacts transiently with the RNA polymerase catalytic core.

The protein localises to the cytoplasm. Its function is as follows. Sigma factors are initiation factors that promote the attachment of RNA polymerase to specific initiation sites and are then released. This sigma factor is the primary sigma factor during exponential growth. This Mycobacterium bovis (strain ATCC BAA-935 / AF2122/97) protein is RNA polymerase sigma factor SigA.